The sequence spans 540 residues: FAD-binding monooxygenase lolF2 (540 aa).

Residues 43 to 46 and 55 to 58 contribute to the FAD site; these read VWRE and DSLF. NADP(+) contacts are provided by residues 53 to 55, 182 to 188, and 205 to 206; these read AVD, TGPSGVQ, and QS.

This sequence belongs to the FAD-binding monooxygenase family. The cofactor is FAD.

It functions in the pathway alkaloid biosynthesis. Its function is as follows. FAD-binding monooxygenase; part of the gene cluster that mediates the biosynthesis of loline alkaloids, potent insecticidal agents composed of a pyrrolizidine ring system and an uncommon ether bridge linking carbons 2 and 7. Lolines are structurally differentiated by the various modifications of the L-amino group and include norloline, loline, N-methylloline, N-acetylloline, N-acetylnorloline, and N-formylloline. The first committed step is the condensation of O-acetyl-L-homoserine (derived from L-aspartic acid) and L-proline, probably catalyzed by the gamma-type pyridoxal 5'-phosphate(PLP)-dependent enzyme lolC, to give the diamino diacid, NACPP. Ensuing cyclization, decarboxylation, and acetylation steps yield 1-exo-acetamidopyrrolizidine (AcAP). LolO is required for installation of the ether bridge upon the pathway intermediate, 1-exo-acetamidopyrrolizidine (AcAP). In sequential 2-oxoglutarate- and O(2)-consuming steps, lolO removes hydrogens from C2 and C7 of AcAP to form both carbon-oxygen bonds in N-acetylnorloline (NANL), the precursor to all other lolines. The enzymes lolD, lolE, lolF and lolT have also been proposed to be involved in the ether-bridge installation. Further processing of the exocyclic moiety of NANL by fungal N-acetamidase (LolN), methyltransferase (LolM), and cytochrome P450 (LolP) enzymes, with occasional involvement of a plant acetyltransferase, generates the other known lolines. LolN transforms NANL to norlonine which is monomethylated and dimethylated to respectively lonine and N-methyllonine (NML) by lolM. LolP catalyzes hydroxylation of the methyl group in N-methylloline (NML) and further oxygenation to N-formylloline (NFL). A plant acetyltransferase is responsible for the acetylation of loline to form N-acetylloline (NAL). LolA might interact with aspartate kinase to prevent feedback inhibition of its activity by these end products and thereby promote production of l-homoserine from l-aspartate. In Epichloe uncinata (Endophyte fungus), this protein is FAD-binding monooxygenase lolF2.